The sequence spans 699 residues: Polyribonucleotide nucleotidyltransferase (699 aa).

Mg(2+) contacts are provided by Asp-488 and Asp-494. One can recognise a KH domain in the interval 555–614 (PRIYSIKVNPDKIKDVIGKGGSVIRSLTEETNTIIDIEDNGIIKIVALDYDKAKQAIRRI). The S1 motif domain maps to 624–692 (GAVYTGKVSH…RQGRIRLSMK (69 aa)).

It belongs to the polyribonucleotide nucleotidyltransferase family. Component of the RNA degradosome, which is a multiprotein complex involved in RNA processing and mRNA degradation. The cofactor is Mg(2+).

The protein localises to the cytoplasm. It carries out the reaction RNA(n+1) + phosphate = RNA(n) + a ribonucleoside 5'-diphosphate. Involved in mRNA degradation. Catalyzes the phosphorolysis of single-stranded polyribonucleotides processively in the 3'- to 5'-direction. The chain is Polyribonucleotide nucleotidyltransferase from Blochmanniella pennsylvanica (strain BPEN).